The following is a 728-amino-acid chain: LPS-assembly protein LptD (728 aa).

Positions 1-21 are cleaved as a signal peptide; that stretch reads MSALPGFTLAALLLNVSLAEA.

It belongs to the LptD family. As to quaternary structure, component of the lipopolysaccharide transport and assembly complex. Interacts with LptE and LptA.

The protein localises to the cell outer membrane. Its function is as follows. Together with LptE, is involved in the assembly of lipopolysaccharide (LPS) at the surface of the outer membrane. The chain is LPS-assembly protein LptD from Thiobacillus denitrificans (strain ATCC 25259 / T1).